The following is a 256-amino-acid chain: Imidazole glycerol phosphate synthase subunit HisF (256 aa).

Residues aspartate 11 and aspartate 130 contribute to the active site.

The protein belongs to the HisA/HisF family. As to quaternary structure, heterodimer of HisH and HisF.

Its subcellular location is the cytoplasm. The enzyme catalyses 5-[(5-phospho-1-deoxy-D-ribulos-1-ylimino)methylamino]-1-(5-phospho-beta-D-ribosyl)imidazole-4-carboxamide + L-glutamine = D-erythro-1-(imidazol-4-yl)glycerol 3-phosphate + 5-amino-1-(5-phospho-beta-D-ribosyl)imidazole-4-carboxamide + L-glutamate + H(+). It functions in the pathway amino-acid biosynthesis; L-histidine biosynthesis; L-histidine from 5-phospho-alpha-D-ribose 1-diphosphate: step 5/9. Its function is as follows. IGPS catalyzes the conversion of PRFAR and glutamine to IGP, AICAR and glutamate. The HisF subunit catalyzes the cyclization activity that produces IGP and AICAR from PRFAR using the ammonia provided by the HisH subunit. This chain is Imidazole glycerol phosphate synthase subunit HisF, found in Psychrobacter sp. (strain PRwf-1).